The following is a 209-amino-acid chain: UPF0174 protein HP_1587 (209 aa).

This sequence belongs to the UPF0174 family.

The chain is UPF0174 protein HP_1587 from Helicobacter pylori (strain ATCC 700392 / 26695) (Campylobacter pylori).